The sequence spans 166 residues: Phosphopantetheine adenylyltransferase (166 aa).

T9 provides a ligand contact to substrate. Residues 9–10 and H17 each bind ATP; that span reads TF. 3 residues coordinate substrate: K41, L78, and R92. Residues 93–95, E103, and 128–134 each bind ATP; these read GLR and HQAIASK.

This sequence belongs to the bacterial CoaD family. Homohexamer. It depends on Mg(2+) as a cofactor.

It is found in the cytoplasm. The catalysed reaction is (R)-4'-phosphopantetheine + ATP + H(+) = 3'-dephospho-CoA + diphosphate. Its pathway is cofactor biosynthesis; coenzyme A biosynthesis; CoA from (R)-pantothenate: step 4/5. Reversibly transfers an adenylyl group from ATP to 4'-phosphopantetheine, yielding dephospho-CoA (dPCoA) and pyrophosphate. This is Phosphopantetheine adenylyltransferase from Roseobacter denitrificans (strain ATCC 33942 / OCh 114) (Erythrobacter sp. (strain OCh 114)).